Here is a 335-residue protein sequence, read N- to C-terminus: Putative type I specificity subunit S.MpnORF89P (335 aa).

The protein belongs to the type-I restriction system S methylase family. As to quaternary structure, the methyltransferase is composed of M and S polypeptides.

The specificity (S) subunit of a type I methyltransferase (MTase); this subunit dictates DNA sequence specificity. The single R subunit has multiple frameshifts and is probably not expressed. This chain is Putative type I specificity subunit S.MpnORF89P, found in Mycoplasma pneumoniae (strain ATCC 29342 / M129 / Subtype 1) (Mycoplasmoides pneumoniae).